A 243-amino-acid polypeptide reads, in one-letter code: Amphiregulin (243 aa).

Residues 1–24 form the signal peptide; that stretch reads MRTPSLSLALSVLSLLVLGSGHYA. Residues 25-96 constitute a propeptide that is removed on maturation; it reads AGLELNGTSS…IVDDSVRVEQ (72 aa). Residue Asn-30 is glycosylated (N-linked (GlcNAc...) asparagine). Polar residues predominate over residues 55–67; sequence STISEMPSGSELS. 2 disordered regions span residues 55–75 and 98–135; these read STIS…DYSE and IKPK…KKKN. Over residues 98–113 the composition is skewed to basic and acidic residues; the sequence is IKPKENKTEGEKSSEK. N-linked (GlcNAc...) asparagine glycosylation is present at Asn-103. Residues 114–135 show a composition bias toward basic residues; sequence PKRKKKGGKGGKGRRNRKKKKN. One can recognise an EGF-like domain in the interval 133–173; the sequence is KKNPCAAKFQNFCIHGECRYIENLEVVTCHCHQDYFGERCG. 3 cysteine pairs are disulfide-bonded: Cys-137/Cys-150, Cys-145/Cys-161, and Cys-163/Cys-172. The chain crosses the membrane as a helical span at residues 190 to 213; it reads IALAAIIVFVSAVSVAAIGIITAV. Asn-236 is a glycosylation site (N-linked (GlcNAc...) asparagine).

It belongs to the amphiregulin family. The immature precursor interacts with CNIH.

Its subcellular location is the membrane. Ligand of the EGF receptor/EGFR. Autocrine growth factor as well as a mitogen for a broad range of target cells including astrocytes, Schwann cells and fibroblasts. The chain is Amphiregulin (Areg) from Rattus norvegicus (Rat).